A 399-amino-acid polypeptide reads, in one-letter code: Methylthioribose kinase (399 aa).

ATP is bound by residues Asn-40, Lys-57, and 111–113 (EDL). Asp-229 serves as a coordination point for substrate. Residue 246–248 (DAE) participates in ATP binding. Arg-344 is a binding site for substrate.

The protein belongs to the methylthioribose kinase family. As to quaternary structure, homodimer.

The enzyme catalyses 5-(methylsulfanyl)-D-ribose + ATP = 5-(methylsulfanyl)-alpha-D-ribose 1-phosphate + ADP + H(+). Its pathway is amino-acid biosynthesis; L-methionine biosynthesis via salvage pathway; S-methyl-5-thio-alpha-D-ribose 1-phosphate from S-methyl-5'-thioadenosine (hydrolase route): step 2/2. Catalyzes the phosphorylation of methylthioribose into methylthioribose-1-phosphate. In Klebsiella pneumoniae (strain 342), this protein is Methylthioribose kinase.